A 725-amino-acid polypeptide reads, in one-letter code: 1,4-alpha-glucan branching enzyme GlgB (725 aa).

Asp406 functions as the Nucleophile in the catalytic mechanism. Glu459 acts as the Proton donor in catalysis.

It belongs to the glycosyl hydrolase 13 family. GlgB subfamily. Monomer.

It carries out the reaction Transfers a segment of a (1-&gt;4)-alpha-D-glucan chain to a primary hydroxy group in a similar glucan chain.. The protein operates within glycan biosynthesis; glycogen biosynthesis. In terms of biological role, catalyzes the formation of the alpha-1,6-glucosidic linkages in glycogen by scission of a 1,4-alpha-linked oligosaccharide from growing alpha-1,4-glucan chains and the subsequent attachment of the oligosaccharide to the alpha-1,6 position. The polypeptide is 1,4-alpha-glucan branching enzyme GlgB (Methylobacillus flagellatus (strain ATCC 51484 / DSM 6875 / VKM B-1610 / KT)).